We begin with the raw amino-acid sequence, 349 residues long: Probable myosin light chain kinase DDB_G0275057 (349 aa).

Residues 1-33 (MGCFNSKEAGAGRPKTTTQQQQQATPEPTVTTA) form a disordered region. The segment covering 16–33 (TTTQQQQQATPEPTVTTA) has biased composition (low complexity). The region spanning 56–313 (YVVGKELGRG…AKQCLDDLWL (258 aa)) is the Protein kinase domain. ATP is bound by residues 62–70 (LGRGAFSVV) and Lys-85. Asp-178 serves as the catalytic Proton acceptor.

Belongs to the protein kinase superfamily. CAMK Ser/Thr protein kinase family. CaMK subfamily.

It carries out the reaction L-seryl-[myosin light chain] + ATP = O-phospho-L-seryl-[myosin light chain] + ADP + H(+). The catalysed reaction is L-threonyl-[myosin light chain] + ATP = O-phospho-L-threonyl-[myosin light chain] + ADP + H(+). Its activity is regulated as follows. Does not have a calmodulin-binding domain. Its function is as follows. May phosphorylate a specific serine in the N-terminus of a myosin light chain. The chain is Probable myosin light chain kinase DDB_G0275057 from Dictyostelium discoideum (Social amoeba).